Consider the following 306-residue polypeptide: Formamidopyrimidine-DNA glycosylase (306 aa).

Pro-2 functions as the Schiff-base intermediate with DNA in the catalytic mechanism. Glu-3 serves as the catalytic Proton donor. Residue Lys-58 is the Proton donor; for beta-elimination activity of the active site. Residues His-114, Arg-136, and Lys-179 each coordinate DNA. Residues 270–306 form an FPG-type zinc finger; it reads SVYDREGEACRTSGCRGTVERIVQAGRSTFYCPHCQK. Arg-296 (proton donor; for delta-elimination activity) is an active-site residue.

The protein belongs to the FPG family. Monomer. Zn(2+) is required as a cofactor.

It carries out the reaction Hydrolysis of DNA containing ring-opened 7-methylguanine residues, releasing 2,6-diamino-4-hydroxy-5-(N-methyl)formamidopyrimidine.. It catalyses the reaction 2'-deoxyribonucleotide-(2'-deoxyribose 5'-phosphate)-2'-deoxyribonucleotide-DNA = a 3'-end 2'-deoxyribonucleotide-(2,3-dehydro-2,3-deoxyribose 5'-phosphate)-DNA + a 5'-end 5'-phospho-2'-deoxyribonucleoside-DNA + H(+). Its function is as follows. Involved in base excision repair of DNA damaged by oxidation or by mutagenic agents. Acts as a DNA glycosylase that recognizes and removes damaged bases. Has a preference for oxidized purines, such as 7,8-dihydro-8-oxoguanine (8-oxoG). Has AP (apurinic/apyrimidinic) lyase activity and introduces nicks in the DNA strand. Cleaves the DNA backbone by beta-delta elimination to generate a single-strand break at the site of the removed base with both 3'- and 5'-phosphates. This chain is Formamidopyrimidine-DNA glycosylase, found in Sinorhizobium medicae (strain WSM419) (Ensifer medicae).